The sequence spans 356 residues: UDP-N-acetylglucosamine--N-acetylmuramyl-(pentapeptide) pyrophosphoryl-undecaprenol N-acetylglucosamine transferase (356 aa).

UDP-N-acetyl-alpha-D-glucosamine contacts are provided by residues 15–17 (TGG), asparagine 127, arginine 163, serine 191, isoleucine 244, 263–268 (ALTVSE), and glutamine 288.

Belongs to the glycosyltransferase 28 family. MurG subfamily.

The protein resides in the cell inner membrane. It carries out the reaction di-trans,octa-cis-undecaprenyl diphospho-N-acetyl-alpha-D-muramoyl-L-alanyl-D-glutamyl-meso-2,6-diaminopimeloyl-D-alanyl-D-alanine + UDP-N-acetyl-alpha-D-glucosamine = di-trans,octa-cis-undecaprenyl diphospho-[N-acetyl-alpha-D-glucosaminyl-(1-&gt;4)]-N-acetyl-alpha-D-muramoyl-L-alanyl-D-glutamyl-meso-2,6-diaminopimeloyl-D-alanyl-D-alanine + UDP + H(+). The protein operates within cell wall biogenesis; peptidoglycan biosynthesis. Cell wall formation. Catalyzes the transfer of a GlcNAc subunit on undecaprenyl-pyrophosphoryl-MurNAc-pentapeptide (lipid intermediate I) to form undecaprenyl-pyrophosphoryl-MurNAc-(pentapeptide)GlcNAc (lipid intermediate II). The polypeptide is UDP-N-acetylglucosamine--N-acetylmuramyl-(pentapeptide) pyrophosphoryl-undecaprenol N-acetylglucosamine transferase (Yersinia pestis (strain Pestoides F)).